The primary structure comprises 301 residues: MSIDKSYCGFIAIVGRPNVGKSTLLNKLLGQKISITSRKAQTTRHRIVGIHTEGAYQAIYVDTPGLHMEEKRAINRLMNKAASSSIGDVELVIFVVEGTRWTPDDEMVLNKLREGKAPVILAVNKVDNVQEKADLLPHLQFLASQMNFLDIVPISAETGLNVATIAAIVRKHLPEATHHFPEDYITDRSQRFMASEIIREKLMRFLGAELPYSVTVEIERFVSNERGGYDINGLILVEREGQKKMVIGNKGAKIKTIGIEARKDMQEMFEAPVHLELWVKVKSGWADDERALRSLGYVDDL.

One can recognise an Era-type G domain in the interval 7–175; sequence YCGFIAIVGR…AAIVRKHLPE (169 aa). Residues 15 to 22 are G1; sequence GRPNVGKS. 15–22 contributes to the GTP binding site; it reads GRPNVGKS. The interval 41–45 is G2; that stretch reads QTTRH. The interval 62-65 is G3; sequence DTPG. GTP contacts are provided by residues 62–66 and 124–127; these read DTPGL and NKVD. Positions 124 to 127 are G4; it reads NKVD. A G5 region spans residues 154 to 156; that stretch reads ISA. One can recognise a KH type-2 domain in the interval 206–283; sequence LGAELPYSVT…HLELWVKVKS (78 aa).

This sequence belongs to the TRAFAC class TrmE-Era-EngA-EngB-Septin-like GTPase superfamily. Era GTPase family. Monomer.

The protein resides in the cytoplasm. It localises to the cell inner membrane. In terms of biological role, an essential GTPase that binds both GDP and GTP, with rapid nucleotide exchange. Plays a role in 16S rRNA processing and 30S ribosomal subunit biogenesis and possibly also in cell cycle regulation and energy metabolism. The protein is GTPase Era of Escherichia coli O157:H7.